We begin with the raw amino-acid sequence, 505 residues long: ATP synthase subunit alpha (505 aa).

Residue 170 to 177 (GDRQTGKT) coordinates ATP.

It belongs to the ATPase alpha/beta chains family. F-type ATPases have 2 components, CF(1) - the catalytic core - and CF(0) - the membrane proton channel. CF(1) has five subunits: alpha(3), beta(3), gamma(1), delta(1), epsilon(1). CF(0) has four main subunits: a(1), b(1), b'(1) and c(9-12).

It is found in the cellular thylakoid membrane. The catalysed reaction is ATP + H2O + 4 H(+)(in) = ADP + phosphate + 5 H(+)(out). In terms of biological role, produces ATP from ADP in the presence of a proton gradient across the membrane. The alpha chain is a regulatory subunit. This chain is ATP synthase subunit alpha, found in Prochlorococcus marinus (strain MIT 9515).